Consider the following 233-residue polypeptide: Esterase FUS5 (233 aa).

Catalysis depends on charge relay system residues Ser-105, Asp-159, and His-187.

This sequence belongs to the LovG family.

Esterase; part of the gene cluster that mediates the biosynthesis of the mycotoxin fusarin C. Within the cluster, FUS1, FUS2, FUS8 and FUS9 are sufficient for fusarin production. The other FUS cluster members are not essential for fusarin C biosynthesis. The chain is Esterase FUS5 from Gibberella moniliformis (strain M3125 / FGSC 7600) (Maize ear and stalk rot fungus).